The primary structure comprises 141 residues: uncharacterized protein (141 aa).

The protein resides in the cytoplasm. This is an uncharacterized protein from Homo sapiens (Human).